We begin with the raw amino-acid sequence, 388 residues long: Mycinamicin VIII C21 methyl hydroxylase (388 aa).

5 residues coordinate heme: histidine 87, arginine 91, arginine 279, histidine 335, and cysteine 337.

The protein belongs to the cytochrome P450 family. It depends on heme as a cofactor.

It functions in the pathway antibiotic biosynthesis; mycinamicin biosynthesis. Its function is as follows. Involved in the biosynthesis of mycinamicin, a 16-membered macrolide antibiotic. Catalyzes hydroxylation at the C21 methyl group of mycinamicin VIII, the earliest macrolide form in the postpolyketide synthase tailoring pathway, leading to mycinamicin VII. Uses ferredoxin MycCII in electron transfer for catalysis. This Micromonospora griseorubida protein is Mycinamicin VIII C21 methyl hydroxylase.